The following is a 353-amino-acid chain: Tetraacyldisaccharide 4'-kinase (353 aa).

Position 66-73 (66-73 (TVGGTGKT)) interacts with ATP.

The protein belongs to the LpxK family.

The catalysed reaction is a lipid A disaccharide + ATP = a lipid IVA + ADP + H(+). The protein operates within glycolipid biosynthesis; lipid IV(A) biosynthesis; lipid IV(A) from (3R)-3-hydroxytetradecanoyl-[acyl-carrier-protein] and UDP-N-acetyl-alpha-D-glucosamine: step 6/6. In terms of biological role, transfers the gamma-phosphate of ATP to the 4'-position of a tetraacyldisaccharide 1-phosphate intermediate (termed DS-1-P) to form tetraacyldisaccharide 1,4'-bis-phosphate (lipid IVA). In Geobacter sulfurreducens (strain ATCC 51573 / DSM 12127 / PCA), this protein is Tetraacyldisaccharide 4'-kinase.